The primary structure comprises 502 residues: uncharacterized protein (502 aa).

This is an uncharacterized protein from Frog virus 3 (isolate Goorha) (FV-3).